Consider the following 555-residue polypeptide: Probable Xaa-Pro aminopeptidase BC1G_13431 (555 aa).

Mn(2+) contacts are provided by Asp-303, Asp-314, Glu-458, and Glu-499. The tract at residues 527–555 is disordered; that stretch reads EGKEQEEEEEREANRKATESRKQKKTWFW. The span at 538 to 547 shows a compositional bias: basic and acidic residues; the sequence is EANRKATESR.

It belongs to the peptidase M24B family. Mn(2+) is required as a cofactor.

It catalyses the reaction Release of any N-terminal amino acid, including proline, that is linked to proline, even from a dipeptide or tripeptide.. Its function is as follows. Catalyzes the removal of a penultimate prolyl residue from the N-termini of peptides. In Botryotinia fuckeliana (strain B05.10) (Noble rot fungus), this protein is Probable Xaa-Pro aminopeptidase BC1G_13431.